The sequence spans 361 residues: U7 snRNA-associated Sm-like protein LSm11 (361 aa).

The segment at 1 to 26 is disordered; it reads MEEREWGARSARAGSPASPPSPRLDV. A phosphoserine mark is found at Ser15 and Ser21. Residue Arg41 is modified to Omega-N-methylarginine. Residues 67–142 form a disordered region; the sequence is RTGRGRARGT…QGPGRSKKAP (76 aa). Positions 76–96 are enriched in low complexity; it reads TGEPASAGTSTGTSTGAGSSS. Residue Lys121 forms a Glycyl lysine isopeptide (Lys-Gly) (interchain with G-Cter in SUMO2) linkage. Ser155 is subject to Phosphoserine. The Sm domain maps to 155–230; it reads SPLGELHRCI…LTLTRLFDRL (76 aa). The segment at 172–205 is SM 1; it reads VHIRTFKGLRGVCTGFLVAFDKFWNMALTDVDET. A disordered region spans residues 268–335; the sequence is RGDTDRSSHR…RKKKRKPKVD (68 aa). At Ser281 the chain carries Phosphoserine. The segment covering 307–323 has biased composition (polar residues); the sequence is GSSVGGTFSRATTLSRG. The SM 2 stretch occupies residues 344-357; that stretch reads INQIFIRGENVLLV.

This sequence belongs to the snRNP Sm proteins family. Component of the heptameric ring U7 snRNP complex, or U7 Sm protein core complex, at least composed of LSM10, LSM11, SNRPB, SNRPD3, SNRPE, SNRPF, SNRPG and U7 snRNA. Formation of the U7 snRNP is an ATP-dependent process mediated by a specialized SMN complex containing at least the Sm protein core complex and additionally, the U7-specific LSM10 and LSM11 proteins. Identified in a histone pre-mRNA complex, at least composed of ERI1, LSM11, SLBP, SNRPB, SYNCRIP and YBX1. Interacts (via the Sm domains) with CLNS1A. Interacts with PRMT5, SMN, ZNF473 and WDR77. Not methylated.

The protein localises to the nucleus. In terms of biological role, component of the U7 snRNP complex that is involved in the histone 3'-end pre-mRNA processing. Increases U7 snRNA levels but not histone 3'-end pre-mRNA processing activity, when overexpressed. Required for cell cycle progression from G1 to S phases. Binds specifically to the Sm-binding site of U7 snRNA. This Mus musculus (Mouse) protein is U7 snRNA-associated Sm-like protein LSm11.